Reading from the N-terminus, the 133-residue chain is MKQLIIKRLNLLICCLCIVIAYGYYAINDYMHYKDYDVTVVNTLTGTQGKGSSLSFIAVYELKDGYRFSEYISPETYSSIEKGDNITVSLRPFDVKQTWFDNIVWFFGMALVQSICGTYIVCSILFRVIGKIE.

This is an uncharacterized protein from Enterobacteria phage T4 (Bacteriophage T4).